The sequence spans 87 residues: CRISPR-associated endoribonuclease Cas2 (87 aa).

Asp-8 is a binding site for Mg(2+).

This sequence belongs to the CRISPR-associated endoribonuclease Cas2 protein family. Homodimer, forms a heterotetramer with a Cas1 homodimer. Mg(2+) is required as a cofactor.

In terms of biological role, CRISPR (clustered regularly interspaced short palindromic repeat), is an adaptive immune system that provides protection against mobile genetic elements (viruses, transposable elements and conjugative plasmids). CRISPR clusters contain sequences complementary to antecedent mobile elements and target invading nucleic acids. CRISPR clusters are transcribed and processed into CRISPR RNA (crRNA). Functions as a ssRNA-specific endoribonuclease. Involved in the integration of spacer DNA into the CRISPR cassette. In Dictyoglomus turgidum (strain DSM 6724 / Z-1310), this protein is CRISPR-associated endoribonuclease Cas2.